We begin with the raw amino-acid sequence, 428 residues long: Palmitoyltransferase pfa4 (428 aa).

Residues 1 to 10 (MLCRSFNISQ) are Cytoplasmic-facing. The chain crosses the membrane as a helical span at residues 11–31 (LAIPFVSVLISFLAYTSQLFF). The Lumenal segment spans residues 32-43 (YYFEEAPLRSEE). The helical transmembrane segment at 44 to 61 (FWRLNIFAVCIWVCYYRA) threads the bilayer. Residues 62 to 134 (CTVDPGRIPK…SNCVSHFTYP (73 aa)) are Cytoplasmic-facing. In terms of domain architecture, DHHC spans 91-141 (RWCRRCEAFKPPRAHHCKTCQRCIPKMDHHCPWTSNCVSHFTYPHFMRFLF). Residue C121 is the S-palmitoyl cysteine intermediate of the active site. A helical membrane pass occupies residues 135–155 (HFMRFLFYAVVGMGYLETLLF). Over 156–177 (ERASIVWASRHLPSYLGPGLGQ) the chain is Lumenal. A helical transmembrane segment spans residues 178 to 198 (LVHLFILLVVNSLTWLALFIL). Over 199 to 428 (LLRSIWSLAL…GILMQRRRQQ (230 aa)) the chain is Cytoplasmic. Positions 339–400 (QRSNDASHSG…WKNSEGDRLR (62 aa)) are disordered. Basic and acidic residues predominate over residues 360–373 (DRFNENKAKERLSE). Residues 374 to 388 (SESDFSDDEEVQDGE) are compositionally biased toward acidic residues. Positions 389 to 400 (EGWKNSEGDRLR) are enriched in basic and acidic residues.

Belongs to the DHHC palmitoyltransferase family. PFA4 subfamily.

The protein resides in the endoplasmic reticulum membrane. It carries out the reaction L-cysteinyl-[protein] + hexadecanoyl-CoA = S-hexadecanoyl-L-cysteinyl-[protein] + CoA. In terms of biological role, mediates the reversible addition of palmitate to target proteins, thereby regulating their membrane association and biological function. In Aspergillus fumigatus (strain ATCC MYA-4609 / CBS 101355 / FGSC A1100 / Af293) (Neosartorya fumigata), this protein is Palmitoyltransferase pfa4.